We begin with the raw amino-acid sequence, 309 residues long: Ribonuclease Z (309 aa).

His63, His65, Asp67, His68, His141, Asp212, and His270 together coordinate Zn(2+). The active-site Proton acceptor is Asp67.

Belongs to the RNase Z family. As to quaternary structure, homodimer. It depends on Zn(2+) as a cofactor.

The enzyme catalyses Endonucleolytic cleavage of RNA, removing extra 3' nucleotides from tRNA precursor, generating 3' termini of tRNAs. A 3'-hydroxy group is left at the tRNA terminus and a 5'-phosphoryl group is left at the trailer molecule.. Functionally, zinc phosphodiesterase, which displays some tRNA 3'-processing endonuclease activity. Probably involved in tRNA maturation, by removing a 3'-trailer from precursor tRNA. The polypeptide is Ribonuclease Z (Halalkalibacterium halodurans (strain ATCC BAA-125 / DSM 18197 / FERM 7344 / JCM 9153 / C-125) (Bacillus halodurans)).